The following is a 308-amino-acid chain: 2-dehydro-3-deoxy-phosphogluconate/2-dehydro-3-deoxy-6-phosphogalactonate aldolase (308 aa).

Substrate-binding positions include 57-58 (TT), 144-146 (YNY), and 169-171 (KDT). The active-site Schiff-base intermediate with substrate is Lys-169.

The protein belongs to the DapA family. KDPG aldolase subfamily. In terms of assembly, homotetramer; dimer of dimers.

The catalysed reaction is 2-dehydro-3-deoxy-6-phospho-D-gluconate = D-glyceraldehyde 3-phosphate + pyruvate. The enzyme catalyses 2-dehydro-3-deoxy-6-phospho-D-galactonate = D-glyceraldehyde 3-phosphate + pyruvate. Its pathway is carbohydrate acid metabolism; 2-dehydro-3-deoxy-D-gluconate degradation; D-glyceraldehyde 3-phosphate and pyruvate from 2-dehydro-3-deoxy-D-gluconate: step 2/2. Functionally, involved in the degradation of glucose and galactose via the Entner-Doudoroff pathway. Catalyzes the reversible cleavage of 2-keto-3-deoxy-6-phosphogluconate (KDPG) and 2-keto-3-deoxygluconate (KDG) forming pyruvate and glyceraldehyde 3-phosphate or glyceraldehyde, respectively. It is also able to catalyze the reversible cleavage of 2-keto-3-deoxy-6-phosphogalactonate (KDPGal) and 2-keto-3-deoxygalactonate (KDGal). This Saccharolobus solfataricus (strain ATCC 35092 / DSM 1617 / JCM 11322 / P2) (Sulfolobus solfataricus) protein is 2-dehydro-3-deoxy-phosphogluconate/2-dehydro-3-deoxy-6-phosphogalactonate aldolase (eda).